The primary structure comprises 268 residues: Small ribosomal subunit protein uS10m (268 aa).

Residues 1–64 constitute a mitochondrion transit peptide; the sequence is MIIRPVVRSL…RITTTTEAPK (64 aa).

The protein belongs to the universal ribosomal protein uS10 family. In terms of assembly, component of the mitochondrial small ribosomal subunit (mt-SSU). Mature N.crassa 74S mitochondrial ribosomes consist of a small (37S) and a large (54S) subunit. The 37S small subunit contains a 16S ribosomal RNA (16S mt-rRNA) and 32 different proteins. The 54S large subunit contains a 23S rRNA (23S mt-rRNA) and 42 different proteins.

The protein resides in the mitochondrion. In terms of biological role, component of the mitochondrial ribosome (mitoribosome), a dedicated translation machinery responsible for the synthesis of mitochondrial genome-encoded proteins, including at least some of the essential transmembrane subunits of the mitochondrial respiratory chain. The mitoribosomes are attached to the mitochondrial inner membrane and translation products are cotranslationally integrated into the membrane. This is Small ribosomal subunit protein uS10m (mrp-10) from Neurospora crassa (strain ATCC 24698 / 74-OR23-1A / CBS 708.71 / DSM 1257 / FGSC 987).